A 197-amino-acid polypeptide reads, in one-letter code: Regulator of free ubiquitin chains 1 (197 aa).

This sequence belongs to the RFU1 family.

It localises to the endosome. Its function is as follows. Inhibitor of the DOA4 deubiquitinase involved in the regulation of protein degradation by the proteasome and maintenance of a normal level of free ubiquitin. The chain is Regulator of free ubiquitin chains 1 (RFU1) from Vanderwaltozyma polyspora (strain ATCC 22028 / DSM 70294 / BCRC 21397 / CBS 2163 / NBRC 10782 / NRRL Y-8283 / UCD 57-17) (Kluyveromyces polysporus).